The following is a 152-amino-acid chain: Eukaryotic translation initiation factor 2 subunit 3 (152 aa).

The residue at position 1 (Ala-1) is an N-acetylalanine. 51–54 (NKID) lines the GTP pocket.

The protein belongs to the TRAFAC class translation factor GTPase superfamily. Classic translation factor GTPase family. EIF2G subfamily. As to quaternary structure, eukaryotic translation initiation factor 2 eIF2 is a heterotrimeric complex composed of an alpha (EIF2S1), a beta (EIF2S2) and a gamma (EIF2S3) chain. eIF2 is member of the 43S pre-initiation complex (43S PIC). Interacts (via C-terminus) with CDC123; the interaction is direct.

Its subcellular location is the cytoplasm. The protein resides in the cytosol. In terms of biological role, member of the eIF2 complex that functions in the early steps of protein synthesis by forming a ternary complex with GTP and initiator tRNA. This complex binds to a 40S ribosomal subunit, followed by mRNA binding to form the 43S pre-initiation complex (43S PIC). Junction of the 60S ribosomal subunit to form the 80S initiation complex is preceded by hydrolysis of the GTP bound to eIF2 and release of an eIF2-GDP binary complex. In order for eIF2 to recycle and catalyze another round of initiation, the GDP bound to eIF2 must exchange with GTP by way of a reaction catalyzed by eIF-2B. In Oryctolagus cuniculus (Rabbit), this protein is Eukaryotic translation initiation factor 2 subunit 3 (EIF2S3).